The chain runs to 400 residues: Cytohesin-3 (400 aa).

A coiled-coil region spans residues 14 to 61 (EDLSLEEREELLDIRRRKKELIDDIERLKYEIAEVMTEIDNLTSVEES). Positions 77 to 206 (FNMDPKKGIQ…IIMLNTSLHN (130 aa)) constitute an SEC7 domain. Residues 265-381 (PDREGWLLKL…WMKSIKASIS (117 aa)) form the PH domain. A 1,2-diacyl-sn-glycero-3-phospho-(1D-myo-inositol-3,4,5-trisphosphate)-binding positions include 273 to 281 (KLGGGRVKT), arginine 285, tyrosine 296, arginine 306, and asparagine 355. The C-terminal autoinhibitory region stretch occupies residues 392 to 400 (RKRRIANKK).

In terms of assembly, interacts with TAMALIN. As to expression, present in all tissues tested, with highest protein levels in brain and adrenal.

Its subcellular location is the cytoplasm. It is found in the cytosol. The protein localises to the cell membrane. Functionally, promotes guanine-nucleotide exchange on ARF1. Promotes the activation of ARF factors through replacement of GDP with GTP. The chain is Cytohesin-3 (Cyth3) from Rattus norvegicus (Rat).